Here is a 198-residue protein sequence, read N- to C-terminus: dCTP deaminase (198 aa).

Residues 99–104, 125–127, and Q144 each bind dCTP; these read RSSLGR and TLE. The active-site Proton donor/acceptor is the E127.

It belongs to the dCTP deaminase family. As to quaternary structure, homotrimer.

It carries out the reaction dCTP + H2O + H(+) = dUTP + NH4(+). The protein operates within pyrimidine metabolism; dUMP biosynthesis; dUMP from dCTP (dUTP route): step 1/2. Its function is as follows. Catalyzes the deamination of dCTP to dUTP. This Rhodopirellula baltica (strain DSM 10527 / NCIMB 13988 / SH1) protein is dCTP deaminase.